The primary structure comprises 418 residues: 3-isopropylmalate dehydratase large subunit (418 aa).

Cysteine 297, cysteine 357, and cysteine 360 together coordinate [4Fe-4S] cluster.

The protein belongs to the aconitase/IPM isomerase family. LeuC type 2 subfamily. As to quaternary structure, heterodimer of LeuC and LeuD. [4Fe-4S] cluster serves as cofactor.

It catalyses the reaction (2R,3S)-3-isopropylmalate = (2S)-2-isopropylmalate. Its pathway is amino-acid biosynthesis; L-leucine biosynthesis; L-leucine from 3-methyl-2-oxobutanoate: step 2/4. Catalyzes the isomerization between 2-isopropylmalate and 3-isopropylmalate, via the formation of 2-isopropylmaleate. The chain is 3-isopropylmalate dehydratase large subunit from Elusimicrobium minutum (strain Pei191).